A 101-amino-acid polypeptide reads, in one-letter code: Small ribosomal subunit protein uS14 (101 aa).

The disordered stretch occupies residues 1–20; that stretch reads MAKTSAVEKNKRRRKLVANH. Positions 10–20 are enriched in basic residues; it reads NKRRRKLVANH.

This sequence belongs to the universal ribosomal protein uS14 family. Part of the 30S ribosomal subunit. Contacts proteins S3 and S10.

Its function is as follows. Binds 16S rRNA, required for the assembly of 30S particles and may also be responsible for determining the conformation of the 16S rRNA at the A site. In Sinorhizobium medicae (strain WSM419) (Ensifer medicae), this protein is Small ribosomal subunit protein uS14.